The chain runs to 442 residues: Metacaspase-5 (442 aa).

The first 18 residues, 1–18, serve as a signal peptide directing secretion; the sequence is MDLLLGVLSSGILQNALP. The interval 19–62 is important for catalytic activity; the sequence is FVAGVGRVKRPKRVKLEEAFREAHLCRPVIPYRAPTPYTGGRVK. 2 N-linked (GlcNAc...) asparagine glycosylation sites follow: Asn69 and Asn112. Residue His146 is part of the active site. Ca(2+)-binding residues include Asp161, Asp177, and Asp178. The active site involves Cys201. Asp208 lines the Ca(2+) pocket. N-linked (GlcNAc...) asparagine glycans are attached at residues Asn234, Asn257, Asn282, and Asn331. Positions 336–442 are negatively regulates catalytic activity; sequence HYVPQQYLQP…QYLSGVGKPL (107 aa). Positions 348 to 371 are enriched in pro residues; that stretch reads PPQPYYPPPQPQQPYYPPPQPQQP. Positions 348–442 are disordered; that stretch reads PPQPYYPPPQ…QYLSGVGKPL (95 aa). A compositionally biased stretch (low complexity) spans 372–382; the sequence is YYPSSQLPTQY. Polar residues predominate over residues 422-434; that stretch reads PSDQSTYYSSAQY.

This sequence belongs to the peptidase C14B family. In terms of processing, in epimastigotes, the unprocessed enzyme appears to be the main form. Auto-processing is dispensable for catalytic activity towards small oligopeptide substrates.

Its subcellular location is the recycling endosome. With respect to regulation, activated by Ca(2+). Its function is as follows. Cysteine protease that cleaves specifically after arginine or lysine residues. May play a role in apoptosis. The polypeptide is Metacaspase-5 (Trypanosoma cruzi (strain CL Brener)).